Consider the following 1072-residue polypeptide: Neurofilament heavy polypeptide (1072 aa).

Position 74 is a phosphoserine (Ser74). Positions 94–409 (EKEQLQALND…KLLEGEECRI (316 aa)) constitute an IF rod domain. 3 coiled-coil regions span residues 98-132 (LQAL…LRQQ), 174-222 (IAHV…LQEE), and 293-380 (LDRL…QLRE). The interval 278-643 (TVQSTLQSEE…AKSPAEAKSP (366 aa)) is 55 X 6 AA approximate tandem repeats of K-S-P-[VAGSE]-[KEVTSGA]-[EAVK]. Phosphoserine occurs at positions 343, 414, and 417. The interval 454 to 1072 (EEQTEEIQVT…PEDKAAKGDK (619 aa)) is disordered. A compositionally biased stretch (acidic residues) spans 455 to 487 (EQTEEIQVTEEVTEEEDKEAQGEEEEEAEEGGE). The span at 488–499 (EAATTSPPAEEA) shows a compositional bias: low complexity. A Phosphoserine modification is found at Ser501. Over residues 501 to 584 (SPEKETKSPV…KSPAEAKSPA (84 aa)) the composition is skewed to basic and acidic residues. Tandem repeats lie at residues 507-512 (KSPVKE), 515-520 (KSPAEA), 521-526 (KSPAEA), 527-532 (KSPAEA), 533-538 (KSPAEV), 539-544 (KSPAEV), 545-550 (KSPAEA), 551-556 (KSPAEA), 557-562 (KSPAEV), 563-568 (KSPAEV), 569-574 (KSPAEA), 575-580 (KSPAEA), 581-586 (KSPAEV), 587-592 (KSPATV), 593-598 (KSPGEA), 599-604 (KSPAEA), 605-610 (KSPAEV), 611-616 (KSPVEA), 617-622 (KSPAEA), 623-628 (KSPASV), 629-634 (KSPGEA), 635-640 (KSPAEA), 641-646 (KSPAEV), 647-652 (KSPATV), 653-658 (KSPVEA), 659-664 (KSPAEV), 665-670 (KSPVTV), 671-676 (KSPAEA), 677-682 (KSPVEV), 683-688 (KSPASV), 689-694 (KSPSEA), 695-700 (KSPAGA), 701-706 (KSPAEA), 707-712 (KSPVVA), 713-718 (KSPAEA), and 719-724 (KSPAEA). Phosphoserine occurs at positions 516, 522, 528, 534, 540, 546, 552, 558, 564, 570, 576, 582, 588, 594, 600, 606, 612, 618, 624, 627, 630, 636, 642, 648, 654, 660, 666, 672, 678, 684, 687, 690, 696, 702, 708, 714, and 720. Residues 600 to 620 (SPAEAKSPAEVKSPVEAKSPA) show a composition bias toward basic and acidic residues. Positions 621-631 (EAKSPASVKSP) are enriched in low complexity. A compositionally biased stretch (basic and acidic residues) spans 720 to 774 (SPAEAKPPAEAKSPAEAKSPAEAKSPAEAKSPAEAKSPVEVKSPEKAKSPVKEGA). The 37; approximate repeat unit spans residues 725–730 (KPPAEA). 7 repeat units span residues 731–736 (KSPAEA), 737–742 (KSPAEA), 743–748 (KSPAEA), 749–754 (KSPAEA), 755–760 (KSPVEV), 761–766 (KSPEKA), and 767–772 (KSPVKE). A phosphoserine mark is found at Ser732, Ser738, Ser744, Ser750, Ser756, and Ser762. Residues 775–780 (KSLAEA) form a 45; approximate repeat. A phosphoserine mark is found at Ser776, Ser782, and Ser788. 2 repeat units span residues 781–786 (KSPEKA) and 787–792 (KSPVKE). Basic and acidic residues-rich tracts occupy residues 781–953 (KSPE…KAAA) and 963–1072 (GVKE…KGDK). A 48; approximate repeat occupies 795–800 (KPPAEV). 4 repeat units span residues 801 to 806 (KSPEKA), 807 to 812 (KSPMKE), 815 to 820 (KSPEKA), and 826 to 831 (KSPEAK). Phosphoserine occurs at positions 802, 808, 816, and 827. Phosphothreonine is present on Thr832. Phosphoserine is present on residues Ser846, Ser852, Ser860, Ser880, and Ser937. Tandem repeats lie at residues 851–856 (KSPAKE), 859–864 (KSPEKE), and 879–884 (KSPVEE).

This sequence belongs to the intermediate filament family. Forms heterodimers with NEFL; which can further hetero-oligomerize (in vitro). Forms heterodimers with INA (in vitro). In terms of processing, there are a number of repeats of the tripeptide K-S-P, NFH is phosphorylated on a number of the serines in this motif. It is thought that phosphorylation of NFH results in the formation of interfilament cross bridges that are important in the maintenance of axonal caliber. Phosphorylation seems to play a major role in the functioning of the larger neurofilament polypeptides (NF-M and NF-H), the levels of phosphorylation being altered developmentally and coincidentally with a change in the neurofilament function. Post-translationally, phosphorylated in the head and rod regions by the PKC kinase PKN1, leading to the inhibition of polymerization. As to expression, expressed in the dorsal root ganglion neurons (at protein level). Expressed in cutaneous and muscular sensory neurons.

The protein resides in the cytoplasm. It is found in the cytoskeleton. It localises to the cell projection. The protein localises to the axon. In terms of biological role, neurofilaments usually contain three intermediate filament proteins: NEFL, NEFM, and NEFH which are involved in the maintenance of neuronal caliber. NEFH has an important function in mature axons that is not subserved by the two smaller NEF proteins. May additionally cooperate with the neuronal intermediate filament proteins PRPH and INA to form neuronal filamentous networks. The polypeptide is Neurofilament heavy polypeptide (Nefh) (Rattus norvegicus (Rat)).